Here is a 338-residue protein sequence, read N- to C-terminus: Activator of 90 kDa heat shock protein ATPase homolog 1 (338 aa).

The residue at position 3 (Lys-3) is an N6-acetyllysine. Lys-182 participates in a covalent cross-link: Glycyl lysine isopeptide (Lys-Gly) (interchain with G-Cter in SUMO1). Phosphoserine is present on Ser-193. Lys-203 participates in a covalent cross-link: Glycyl lysine isopeptide (Lys-Gly) (interchain with G-Cter in SUMO2). At Lys-212 the chain carries N6-acetyllysine. Phosphotyrosine; by ABL is present on Tyr-223. Ser-258 is modified (phosphoserine).

This sequence belongs to the AHA1 family. In terms of assembly, interacts with HSPCA/HSP90. Interacts (phosphorylated on Tyr-223) with HSP90AA1; the interaction activates HSP90AA1 ATPase activity. Interacts with HSP90AB1. Interacts with GCH1. Interacts with SRPK1. Interacts with FLCN. As to quaternary structure, (Microbial infection) Interacts with vesicular stomatitis virus glycoprotein (VSV G) (via cytoplasmic tail). Post-translationally, phosphorylation at Tyr-223 enhances binding to chaperone HSP90AA1. In terms of tissue distribution, expressed in numerous tissues, including brain, heart, skeletal muscle and kidney and, at lower levels, liver and placenta.

The protein localises to the cytoplasm. The protein resides in the cytosol. Its subcellular location is the endoplasmic reticulum. Functionally, acts as a co-chaperone of HSP90AA1. Activates the ATPase activity of HSP90AA1 leading to increase in its chaperone activity. Competes with the inhibitory co-chaperone FNIP1 for binding to HSP90AA1, thereby providing a reciprocal regulatory mechanism for chaperoning of client proteins. Competes with the inhibitory co-chaperone TSC1 for binding to HSP90AA1, thereby providing a reciprocal regulatory mechanism for chaperoning of client proteins. This chain is Activator of 90 kDa heat shock protein ATPase homolog 1 (AHSA1), found in Homo sapiens (Human).